Here is a 145-residue protein sequence, read N- to C-terminus: uncharacterized protein (145 aa).

S67 bears the Phosphoserine mark.

As to expression, expressed in retina and retinoblastoma.

This is an uncharacterized protein from Homo sapiens (Human).